Reading from the N-terminus, the 425-residue chain is Trigger factor (425 aa).

Residues 158 to 231 (GDLVRVNMEV…VEEVYKRTLP (74 aa)) enclose the PPIase FKBP-type domain.

Belongs to the FKBP-type PPIase family. Tig subfamily.

It is found in the cytoplasm. The enzyme catalyses [protein]-peptidylproline (omega=180) = [protein]-peptidylproline (omega=0). In terms of biological role, involved in protein export. Acts as a chaperone by maintaining the newly synthesized protein in an open conformation. Functions as a peptidyl-prolyl cis-trans isomerase. The protein is Trigger factor (tig) of Thermotoga maritima (strain ATCC 43589 / DSM 3109 / JCM 10099 / NBRC 100826 / MSB8).